The chain runs to 239 residues: DNA repair protein RecO (239 aa).

This sequence belongs to the RecO family.

Involved in DNA repair and RecF pathway recombination. The chain is DNA repair protein RecO from Bifidobacterium longum subsp. infantis (strain ATCC 15697 / DSM 20088 / JCM 1222 / NCTC 11817 / S12).